Consider the following 113-residue polypeptide: Carboxysome shell protein CcmK4 (113 aa).

One can recognise a BMC domain in the interval 5 to 91; it reads AIGSLETKGF…PHENVEAVFP (87 aa).

It belongs to the bacterial microcompartments protein family. CcmK subfamily. Homohexamer. Interacts stably with CcmK3, probably forms heterohexamers with a 1:2 CcmK3:CcmK4 stoichiometry.

The protein resides in the carboxysome. Functionally, one of the shell proteins of the carboxysome, a polyhedral inclusion where RuBisCO (ribulose bisphosphate carboxylase, rbcL-rbcS) is sequestered. Assembles into hexamers which make sheets that form the facets of the polyhedral carboxysome. The hexamer central pore probably regulates metabolite flux. In terms of biological role, a minor shell protein of the carboxysome, a polyhedral inclusion where RuBisCO (ribulose bisphosphate carboxylase, rbcL-rbcS) is sequestered. Hexamers form sheets that form the facets of the polyhedral carboxysome. The shell is 4.5 nm thick, as observed for CcmK proteins. In PCC 7942 there are several CcmK paralogs with presumably functional differences; replacing the central pore residues (34-37) with those of CcmK2 from this organism (Tyr-Glu-Lys-Ile) allows the bacterium to make carboxysomes, but the expression level is too low to know if the carboxysome is functional for CO(2) fixation. This subunit probably makes both homohexamers and heterohexamers with CcmK3. The CcmK3-CcmK4 heterohexmers have been suggested to cap other hexamers, perhaps to alter metabolite flux. The polypeptide is Carboxysome shell protein CcmK4 (Synechococcus elongatus (strain ATCC 33912 / PCC 7942 / FACHB-805) (Anacystis nidulans R2)).